A 557-amino-acid chain; its full sequence is Estrogen receptor beta (557 aa).

Residues 1-154 (MMAAASSPEK…SSGGKADLHY (154 aa)) form a modulating region. 2 consecutive NR C4-type zinc fingers follow at residues 155–175 (CAVC…CEGC) and 191–215 (CPAT…LRKC). The segment at residues 155 to 220 (CAVCHDYASG…RLRKCYEVGM (66 aa)) is a DNA-binding region (nuclear receptor). Residues 240–268 (LTRLSSQGKTAEPKGITGPAEGSLNKPEK) are disordered. The NR LBD domain maps to 272–508 (TPEQLIERIL…DLLLEMLDAH (237 aa)). Residues 513-557 (SCLPHQPPQQDSKDQSEVPAPLHSSAGGPSNTWTPSSARAGGESQ) are disordered. The span at 539–557 (GGPSNTWTPSSARAGGESQ) shows a compositional bias: polar residues.

This sequence belongs to the nuclear hormone receptor family. NR3 subfamily. Binds DNA as a homodimer. Can form a heterodimer with ER-alpha.

It localises to the nucleus. Functionally, binds estrogens with an affinity similar to that of ER-alpha, and activates expression of reporter genes containing estrogen response elements (ERE) in an estrogen-dependent manner. This chain is Estrogen receptor beta (esr2), found in Oreochromis niloticus (Nile tilapia).